The primary structure comprises 124 residues: Superoxide reductase (124 aa).

6 residues coordinate Fe cation: glutamate 14, histidine 16, histidine 41, histidine 47, cysteine 111, and histidine 114.

This sequence belongs to the desulfoferrodoxin family. In terms of assembly, homotetramer. Fe cation serves as cofactor.

The catalysed reaction is reduced [rubredoxin] + superoxide + 2 H(+) = oxidized [rubredoxin] + H2O2. Its function is as follows. Uses electrons from reduced NADP, by way of rubredoxin and an oxidoreductase, to catalyze the reduction of superoxide to hydrogen peroxide. This is Superoxide reductase (sorA) from Pyrococcus furiosus (strain ATCC 43587 / DSM 3638 / JCM 8422 / Vc1).